Here is a 65-residue protein sequence, read N- to C-terminus: Photosystem II reaction center protein J (65 aa).

A compositionally biased stretch (basic and acidic residues) spans 1–17; sequence MSTKLKGPDGRIPDRLP. The disordered stretch occupies residues 1–21; sequence MSTKLKGPDGRIPDRLPDGSP. Residues 36–56 form a helical membrane-spanning segment; it reads LWLVATVGGMAVLSVLGLFFF.

It belongs to the PsbJ family. PSII is composed of 1 copy each of membrane proteins PsbA, PsbB, PsbC, PsbD, PsbE, PsbF, PsbH, PsbI, PsbJ, PsbK, PsbL, PsbM, PsbT, PsbX, PsbY, Psb30/Ycf12, peripheral proteins PsbO, CyanoQ (PsbQ), PsbU, PsbV and a large number of cofactors. It forms dimeric complexes.

The protein resides in the cellular thylakoid membrane. Functionally, one of the components of the core complex of photosystem II (PSII). PSII is a light-driven water:plastoquinone oxidoreductase that uses light energy to abstract electrons from H(2)O, generating O(2) and a proton gradient subsequently used for ATP formation. It consists of a core antenna complex that captures photons, and an electron transfer chain that converts photonic excitation into a charge separation. This Prochlorococcus marinus (strain MIT 9313) protein is Photosystem II reaction center protein J.